We begin with the raw amino-acid sequence, 134 residues long: Translation initiation factor 2 subunit beta (134 aa).

This sequence belongs to the eIF-2-beta/eIF-5 family. In terms of assembly, heterotrimer composed of an alpha, a beta and a gamma chain.

Its function is as follows. eIF-2 functions in the early steps of protein synthesis by forming a ternary complex with GTP and initiator tRNA. The chain is Translation initiation factor 2 subunit beta from Pyrobaculum neutrophilum (strain DSM 2338 / JCM 9278 / NBRC 100436 / V24Sta) (Thermoproteus neutrophilus).